Here is an 812-residue protein sequence, read N- to C-terminus: MRIVNYCLNVLSAGVSRLLVRSKVLPEKPTEQYELNSKNPTFYIVRLNSRFDLAALARVCKRHGLPDPREQQVLGTQRLDRFIGIENPPPLIGDIAKPTNALAQGKQIIDHLLSSGQKDVQVIPVTILWGRAPGKEKPGLSTLITHSLTPSWFRKLFVVLFSGRDNFIRFSQPLDLSLLVDEKADVNELPQKLLRVARVHFRRQKLAATGPKMPSREQLFNSLLASPTIKKAIQDEAKAKNISQAQARQNAVKLLNEIAANYSEAMIRVAERFLTWLWNKLYNGIDIKYTEQIHELTNKGHEIIYMPCHRSHMDYLLLTYAIYHQGLVPPHIAAGINLNFFPAGGIFRRSGAFFIRRSFAGNKLYSAVFKEYLSQLFIKGYSVKFYTEGGRSRTGRLLPPKTGMLAMTMQAMLRGIDRPISIVPVYIGYEHVMEINTYLKELAGNDKKGESIFGIFKAIKNLKNYGRGYLNFGDPISINQYLNDNQPNWRDDIHPTDVQKPQWLGPQVANLADQVMVKINNAAALNAVNLLAMILLVNDKHALSKPKLLAQLDFYLRLQRDASYSNKVTAPEETPEQLLTHALKLNKFDVISDEFGEIIAINDKEKTLFNYYRNNILHLFAVPSLIALHLFREKTTTVSKCQQLVAAFYPLFAKEWYLRELDEDYITRILANFVDQNLIELDGDNIHITNTNDCLAKLDMLGKALNFTLQRYAIVIGFIQTSNGIEKAELERESQVLAQRLGTLHGIKTPEFFDKKVLVSFIDNLRAQSLITDGDAGLIGSVQLCETYMHLKALLPARVWQSISDIVQGQCK.

An HXXXXD motif motif is present at residues 308–313 (CHRSHM).

Belongs to the GPAT/DAPAT family.

The protein resides in the cell inner membrane. The enzyme catalyses sn-glycerol 3-phosphate + an acyl-CoA = a 1-acyl-sn-glycero-3-phosphate + CoA. Its pathway is phospholipid metabolism; CDP-diacylglycerol biosynthesis; CDP-diacylglycerol from sn-glycerol 3-phosphate: step 1/3. In Pseudoalteromonas translucida (strain TAC 125), this protein is Glycerol-3-phosphate acyltransferase.